A 79-amino-acid chain; its full sequence is Conotoxin VnMEKL-024 (79 aa).

An N-terminal signal peptide occupies residues 1–19 (MQKLTILLLVAAVLMSTQA). The propeptide occupies 20-50 (LIRGGVEKRQEAKRNFFSKRKTTAESWWEGE). Disulfide bonds link C51–C65, C58–C69, and C64–C76.

This sequence belongs to the conotoxin O2 superfamily. In terms of tissue distribution, expressed by the venom duct.

It localises to the secreted. The protein is Conotoxin VnMEKL-024 of Conus ventricosus (Mediterranean cone).